The following is a 208-amino-acid chain: N-(5'-phosphoribosyl)anthranilate isomerase (208 aa).

It belongs to the TrpF family.

The enzyme catalyses N-(5-phospho-beta-D-ribosyl)anthranilate = 1-(2-carboxyphenylamino)-1-deoxy-D-ribulose 5-phosphate. It participates in amino-acid biosynthesis; L-tryptophan biosynthesis; L-tryptophan from chorismate: step 3/5. The protein is N-(5'-phosphoribosyl)anthranilate isomerase of Dechloromonas aromatica (strain RCB).